A 342-amino-acid polypeptide reads, in one-letter code: Uroporphyrinogen decarboxylase (342 aa).

Residues 24 to 28 (RQAGR), Asp-74, Tyr-149, Ser-204, and His-319 contribute to the substrate site.

The protein belongs to the uroporphyrinogen decarboxylase family. Homodimer.

Its subcellular location is the cytoplasm. The enzyme catalyses uroporphyrinogen III + 4 H(+) = coproporphyrinogen III + 4 CO2. Its pathway is porphyrin-containing compound metabolism; protoporphyrin-IX biosynthesis; coproporphyrinogen-III from 5-aminolevulinate: step 4/4. Catalyzes the decarboxylation of four acetate groups of uroporphyrinogen-III to yield coproporphyrinogen-III. The protein is Uroporphyrinogen decarboxylase of Chelativorans sp. (strain BNC1).